Reading from the N-terminus, the 686-residue chain is ATP-dependent zinc metalloprotease FtsH 1 (686 aa).

Residues M1–R33 are Cytoplasmic-facing. Residues S34–I54 form a helical membrane-spanning segment. Topologically, residues K55 to W164 are periplasmic. Residues V165–F185 traverse the membrane as a helical segment. Residues M186 to G686 lie on the Cytoplasmic side of the membrane. G257–T264 serves as a coordination point for ATP. H479 lines the Zn(2+) pocket. E480 is a catalytic residue. Residues H483 and D555 each coordinate Zn(2+). The tract at residues Y661–G686 is disordered. The span at T670 to G686 shows a compositional bias: polar residues.

The protein in the central section; belongs to the AAA ATPase family. This sequence in the C-terminal section; belongs to the peptidase M41 family. In terms of assembly, homohexamer. The cofactor is Zn(2+).

It localises to the cell inner membrane. Its function is as follows. Acts as a processive, ATP-dependent zinc metallopeptidase for both cytoplasmic and membrane proteins. Plays a role in the quality control of integral membrane proteins. The chain is ATP-dependent zinc metalloprotease FtsH 1 from Salinibacter ruber (strain M8).